The sequence spans 455 residues: SUN domain-containing protein 2 (455 aa).

Residues 1-12 (MSASTVSITASP) are compositionally biased toward polar residues. The interval 1 to 99 (MSASTVSITA…RTRKSQGNKI (99 aa)) is disordered. Residue Ser2 is modified to N-acetylserine. At 2–105 (SASTVSITAS…GNKIDRGKWK (104 aa)) the chain is on the nuclear side. Ser63 is subject to Phosphoserine. The span at 74–88 (KSGSTATGTNTTTTQ) shows a compositional bias: low complexity. A Nuclear localization signal motif is present at residues 88–95 (QRRTRKSQ). A helical transmembrane segment spans residues 106 to 128 (TVVRVFAKQFGALLLLVGLIQLI). The Perinuclear space portion of the chain corresponds to 129-455 (RKLTLKDSSL…ELDSVSVAHA (327 aa)). The stretch at 201-225 (LHSELKKVESKTERLQVSVDELNAK) forms a coiled coil. The region spanning 285–447 (GGAFVMGHSD…YRFRVHGREL (163 aa)) is the SUN domain.

Forms homomers (e.g. dimers, trimers and tetramers) and heteromers with SUN1. Interacts with SUN3, SUN4 and TIK. Core component of the LINC complex which is composed of inner nuclear membrane SUN domain-containing proteins coupled to outer nuclear membrane WIP and WIT proteins. The LINC complex also involves nucleoskeletal proteins CRWN/LINC and possibly KAKU4 and the cytoskeletal myosin KAKU1. Interacts with LINC1, WIP1, WIP2 and WIP3 at the nuclear envelope (NE). Interacts with SINE1, SINE2, SINE3 and SINE4. Interacts with NEAP1, NEA2 and NEAP3. Expressed in roots, hypocotyls, cotyledons and leaves and inflorescences.

It localises to the nucleus inner membrane. The protein localises to the cytoplasm. Its subcellular location is the cytoskeleton. The protein resides in the phragmoplast. It is found in the endoplasmic reticulum membrane. It localises to the nucleus envelope. Functionally, component of SUN-protein-containing multivariate complexes also called LINC complexes which link the nucleoskeleton and cytoskeleton by providing versatile outer nuclear membrane attachment sites for cytoskeletal filaments. Required for the maintenance and/or formation of polarized nuclear shape in root hairs. Modulates the anchoring and mobility of WIP proteins in the nuclear envelope (NE). In association with SUN1, may be involved in telomere attachment to nuclear envelope in the prophase of meiosis. As component of the SUN-WIP-WIT2-KAKU1 complex, mediates the transfer of cytoplasmic forces to the nuclear envelope (NE), leading to nuclear shape changes. In Arabidopsis thaliana (Mouse-ear cress), this protein is SUN domain-containing protein 2.